The sequence spans 621 residues: MGSTVDGEKYIRNLASYIRSHEKRFARAPYRAPNHSIFSDRPVQLQLTVHHLYYLLTKFEELGVNTGPLNIRIENLHSETFPSDYTSFLNQSPKKNDFDDNMSLNSIVTMGSILSNVSSVWSIFSTAPSEASETRNKQRILAILRYIYSCFTKLPAISLVYNPKTPLISQYEEFPLDTAVPITVFKNLSSLEIRGYDIRSIFGWDFLSTTLKSLILHHCDLADLSEVLIKLVLDDAELYRFRSSRQTYPQQPNSQPCEQHPAHANLRRSVSLGSKDYLKSSHPPVHKTLSQSVLVLSKDGNASSSGGTENQSANSSSSLMEKDAILSSSSWSQLLYLRCSSCKLKSIPKNVFLSLQSLVSLDLSGNELTEIPYALGELPQLCSLNLASNKITGCRTFYHISLSHLQILVLSRNHLTSLSGLENVPSLEKLDIRDNSITDVVEFRRLVGNTNFEEAYLSLNPFTKTYSSYRITIFNYFREYPGSKDIMLDGRGPGMLEKMYLSEKASAPERVISLNPVNQKSHSPAIKSSSTLRKASKTRIVDLSAPNSAVFSKNASGGDTSSNVSLLNGSASEEIPQNTESGQVFRKKIEMLRQEAGPEWVDALMKESVVKHKFRNKDESV.

S269, S271, S274, S290, and S292 each carry phosphoserine. LRR repeat units lie at residues Q333 to S354, S357 to P379, Q380 to S401, H404 to P425, S426 to V447, and N451 to T472. The tract at residues S552–S581 is disordered.

Its subcellular location is the cytoplasm. The protein localises to the nucleus. It localises to the vacuole membrane. This is an uncharacterized protein from Schizosaccharomyces pombe (strain 972 / ATCC 24843) (Fission yeast).